The chain runs to 344 residues: Glycerol-3-phosphate dehydrogenase [NAD(P)+] (344 aa).

NADPH-binding residues include serine 11, tryptophan 12, histidine 32, arginine 33, and lysine 105. 3 residues coordinate sn-glycerol 3-phosphate: lysine 105, glycine 135, and serine 137. Residue alanine 139 participates in NADPH binding. Sn-glycerol 3-phosphate-binding residues include lysine 190, aspartate 243, serine 253, arginine 254, and asparagine 255. Lysine 190 (proton acceptor) is an active-site residue. Position 254 (arginine 254) interacts with NADPH. Residues valine 278 and glutamate 280 each contribute to the NADPH site.

The protein belongs to the NAD-dependent glycerol-3-phosphate dehydrogenase family.

It is found in the cytoplasm. The enzyme catalyses sn-glycerol 3-phosphate + NAD(+) = dihydroxyacetone phosphate + NADH + H(+). It carries out the reaction sn-glycerol 3-phosphate + NADP(+) = dihydroxyacetone phosphate + NADPH + H(+). It functions in the pathway membrane lipid metabolism; glycerophospholipid metabolism. Catalyzes the reduction of the glycolytic intermediate dihydroxyacetone phosphate (DHAP) to sn-glycerol 3-phosphate (G3P), the key precursor for phospholipid synthesis. This Oceanobacillus iheyensis (strain DSM 14371 / CIP 107618 / JCM 11309 / KCTC 3954 / HTE831) protein is Glycerol-3-phosphate dehydrogenase [NAD(P)+].